A 200-amino-acid chain; its full sequence is Small ribosomal subunit protein uS4 (200 aa).

Positions 1–13 (MARYRGPKQKIAR) are enriched in basic residues. Positions 1 to 44 (MARYRGPKQKIARRFKEPIFGPSKALERKPYPPGQHGQSRRRRE) are disordered. Residues 92–154 (ARLDNTVFRM…SQDLEVIQTN (63 aa)) enclose the S4 RNA-binding domain.

This sequence belongs to the universal ribosomal protein uS4 family. In terms of assembly, part of the 30S ribosomal subunit. Contacts protein S5. The interaction surface between S4 and S5 is involved in control of translational fidelity.

One of the primary rRNA binding proteins, it binds directly to 16S rRNA where it nucleates assembly of the body of the 30S subunit. In terms of biological role, with S5 and S12 plays an important role in translational accuracy. In Salinibacter ruber (strain DSM 13855 / M31), this protein is Small ribosomal subunit protein uS4.